A 206-amino-acid chain; its full sequence is Small ribosomal subunit protein uS4 (206 aa).

A disordered region spans residues 18–46 (NIWGRPKSPVNRREYGPGQHGQRRKGKLS). In terms of domain architecture, S4 RNA-binding spans 94–156 (RRLDAVVYRA…SKQNVAVLEA (63 aa)).

Belongs to the universal ribosomal protein uS4 family. As to quaternary structure, part of the 30S ribosomal subunit. Contacts protein S5. The interaction surface between S4 and S5 is involved in control of translational fidelity.

One of the primary rRNA binding proteins, it binds directly to 16S rRNA where it nucleates assembly of the body of the 30S subunit. In terms of biological role, with S5 and S12 plays an important role in translational accuracy. The polypeptide is Small ribosomal subunit protein uS4 (Ruegeria sp. (strain TM1040) (Silicibacter sp.)).